The sequence spans 322 residues: Transcription factor IIIA (322 aa).

9 C2H2-type zinc fingers span residues 12–36 (FVCSFLNCKASFSKAWKLEAHYCKH), 42–64 (FACDRCDKTFCTRCQLTRHNLSH), 70–95 (YQCLEDGCSESFISTAGLKNHVERVH), 102–126 (YVCDYEGCAKEFRKKKQLRSHKCEH), 132–156 (FECQYEGCGKKYTTSKKLQKHEKVH), 159–184 (YPCAEEGCDFQGRMWTEYQAHRKAAH), 188–211 (LQCDSCAKVFHKAWFLKKHKLFVH), 218–243 (FKCTKEGCQKTYTTHFNLQNHILSFH), and 249–273 (FICPHDGCGKAFAMEGSLKRHAVVH). Positions 272–322 (VHDPQKKKLQKKTKRGRKKKLEPKTNVSDDSELPAQLHGLSLNTSTSQNNP) are disordered. Residues 278-292 (KKLQKKTKRGRKKKL) are compositionally biased toward basic residues. The segment covering 312–322 (SLNTSTSQNNP) has biased composition (polar residues).

The protein resides in the nucleus. Its function is as follows. Involved in ribosomal large subunit biogenesis. Interacts with the internal control region (ICR) of approximately 50 bases within the 5S RNA genes, is required for correct transcription of these genes by RNA polymerase III. Also binds the transcribed 5S RNA's. This Ictalurus punctatus (Channel catfish) protein is Transcription factor IIIA (gtf3a).